The primary structure comprises 309 residues: Tagatose-6-phosphate kinase (309 aa).

Belongs to the carbohydrate kinase PfkB family. LacC subfamily.

The enzyme catalyses D-tagatofuranose 6-phosphate + ATP = D-tagatofuranose 1,6-bisphosphate + ADP + H(+). It participates in carbohydrate metabolism; D-tagatose 6-phosphate degradation; D-glyceraldehyde 3-phosphate and glycerone phosphate from D-tagatose 6-phosphate: step 1/2. The protein is Tagatose-6-phosphate kinase of Streptococcus pyogenes serotype M4 (strain MGAS10750).